Here is a 213-residue protein sequence, read N- to C-terminus: ER lumen protein-retaining receptor (213 aa).

The Lumenal segment spans residues 1-2; sequence MN. Residues 3 to 21 traverse the membrane as a helical segment; sequence IFRITADLAHAVAIVILLL. Residues 22-35 lie on the Cytoplasmic side of the membrane; that stretch reads KIWKSRSCEGISGR. Residues 36 to 53 form a helical membrane-spanning segment; the sequence is SQILFAVTFFTRYLDLFT. The Lumenal portion of the chain corresponds to 54 to 61; it reads SFYSLYNT. A helical transmembrane segment spans residues 62 to 80; the sequence is VMKVLFLAGSIGTVYLMWV. The Cytoplasmic portion of the chain corresponds to 81–96; the sequence is KFKATYDRNNDTFRIE. The helical transmembrane segment at 97 to 110 threads the bilayer; the sequence is FLVIPSIILALIIN. Residues 111-117 are Lumenal-facing; that stretch reads HEFMFME. A helical membrane pass occupies residues 118–137; it reads VMWTFSIYLEAVAIMPQLFM. Residues 138–149 are Cytoplasmic-facing; sequence LSRTGNAETITA. Residues 150–168 traverse the membrane as a helical segment; that stretch reads HYLFALGSYRFLYIFNWVY. At 169 to 178 the chain is on the lumenal side; that stretch reads RYYTESFFDP. A helical transmembrane segment spans residues 179–199; that stretch reads IAVVAGIVQTVLYADFFYLYI. Over 200–213 the chain is Cytoplasmic; the sequence is TRVIQSNRQFEMSA.

Belongs to the ERD2 family.

Its subcellular location is the endoplasmic reticulum membrane. In terms of biological role, required for the retention of luminal endoplasmic reticulum proteins. Determines the specificity of the luminal ER protein retention system. Also required for normal vesicular traffic through the Golgi. The sequence is that of ER lumen protein-retaining receptor (erd-2.1) from Caenorhabditis briggsae.